The chain runs to 218 residues: Octanoyltransferase (218 aa).

Residues 31 to 206 (REAADEVWLV…QLVKHLDYAE (176 aa)) form the BPL/LPL catalytic domain. Substrate-binding positions include 70-77 (RGGQVTYH), 137-139 (SLG), and 150-152 (GLA). Cys-168 functions as the Acyl-thioester intermediate in the catalytic mechanism.

Belongs to the LipB family.

It is found in the cytoplasm. The enzyme catalyses octanoyl-[ACP] + L-lysyl-[protein] = N(6)-octanoyl-L-lysyl-[protein] + holo-[ACP] + H(+). It participates in protein modification; protein lipoylation via endogenous pathway; protein N(6)-(lipoyl)lysine from octanoyl-[acyl-carrier-protein]: step 1/2. Its function is as follows. Catalyzes the transfer of endogenously produced octanoic acid from octanoyl-acyl-carrier-protein onto the lipoyl domains of lipoate-dependent enzymes. Lipoyl-ACP can also act as a substrate although octanoyl-ACP is likely to be the physiological substrate. This chain is Octanoyltransferase, found in Pseudomonas syringae pv. syringae (strain B728a).